Consider the following 245-residue polypeptide: 1-(5-phosphoribosyl)-5-[(5-phosphoribosylamino)methylideneamino] imidazole-4-carboxamide isomerase (245 aa).

The active-site Proton acceptor is the aspartate 8. Residue aspartate 130 is the Proton donor of the active site.

It belongs to the HisA/HisF family.

It localises to the cytoplasm. It catalyses the reaction 1-(5-phospho-beta-D-ribosyl)-5-[(5-phospho-beta-D-ribosylamino)methylideneamino]imidazole-4-carboxamide = 5-[(5-phospho-1-deoxy-D-ribulos-1-ylimino)methylamino]-1-(5-phospho-beta-D-ribosyl)imidazole-4-carboxamide. It participates in amino-acid biosynthesis; L-histidine biosynthesis; L-histidine from 5-phospho-alpha-D-ribose 1-diphosphate: step 4/9. The sequence is that of 1-(5-phosphoribosyl)-5-[(5-phosphoribosylamino)methylideneamino] imidazole-4-carboxamide isomerase from Teredinibacter turnerae (strain ATCC 39867 / T7901).